The sequence spans 526 residues: Peptide chain release factor 3 (526 aa).

A tr-type G domain is found at 8-277 (DKRRTFAIIS…GLTQWAPKPQ (270 aa)). GTP contacts are provided by residues 17-24 (SHPDAGKT), 85-89 (DTPGH), and 139-142 (NKLD).

This sequence belongs to the TRAFAC class translation factor GTPase superfamily. Classic translation factor GTPase family. PrfC subfamily.

The protein resides in the cytoplasm. In terms of biological role, increases the formation of ribosomal termination complexes and stimulates activities of RF-1 and RF-2. It binds guanine nucleotides and has strong preference for UGA stop codons. It may interact directly with the ribosome. The stimulation of RF-1 and RF-2 is significantly reduced by GTP and GDP, but not by GMP. The sequence is that of Peptide chain release factor 3 from Actinobacillus succinogenes (strain ATCC 55618 / DSM 22257 / CCUG 43843 / 130Z).